We begin with the raw amino-acid sequence, 243 residues long: Protein DMP8 (243 aa).

A disordered region spans residues Met-1–Leu-37. Positions Thr-14–Pro-29 are enriched in low complexity. The next 4 helical transmembrane spans lie at Met-70–Ile-90, Gly-98–Phe-118, Val-174–Asp-194, and Val-212–Pro-232.

It belongs to the plant DMP1 protein family. As to expression, restricted to flowers.

It is found in the endoplasmic reticulum membrane. It localises to the vacuole membrane. In terms of biological role, involved in membrane remodeling. The protein is Protein DMP8 of Arabidopsis thaliana (Mouse-ear cress).